We begin with the raw amino-acid sequence, 219 residues long: Cytidylate kinase (219 aa).

21 to 29 provides a ligand contact to ATP; that stretch reads GPAASGKGT.

It belongs to the cytidylate kinase family. Type 1 subfamily.

It is found in the cytoplasm. The catalysed reaction is CMP + ATP = CDP + ADP. The enzyme catalyses dCMP + ATP = dCDP + ADP. This chain is Cytidylate kinase, found in Rickettsia typhi (strain ATCC VR-144 / Wilmington).